The sequence spans 339 residues: Phosphoribosylformylglycinamidine cyclo-ligase (339 aa).

This sequence belongs to the AIR synthase family.

It is found in the cytoplasm. It catalyses the reaction 2-formamido-N(1)-(5-O-phospho-beta-D-ribosyl)acetamidine + ATP = 5-amino-1-(5-phospho-beta-D-ribosyl)imidazole + ADP + phosphate + H(+). The protein operates within purine metabolism; IMP biosynthesis via de novo pathway; 5-amino-1-(5-phospho-D-ribosyl)imidazole from N(2)-formyl-N(1)-(5-phospho-D-ribosyl)glycinamide: step 2/2. This is Phosphoribosylformylglycinamidine cyclo-ligase from Streptococcus thermophilus (strain ATCC BAA-491 / LMD-9).